The sequence spans 480 residues: Trigger factor (480 aa).

In terms of domain architecture, PPIase FKBP-type spans 161 to 249 (GDRLLITGKF…VVEVLKEQLP (89 aa)). Residues 426–480 (TEEPVEKEAEEKNEEFAIDHEVLPTKDHDAIPAAKYDDNTPKGAETEDKQEKDKD) are disordered. Basic and acidic residues predominate over residues 429-480 (PVEKEAEEKNEEFAIDHEVLPTKDHDAIPAAKYDDNTPKGAETEDKQEKDKD).

The protein belongs to the FKBP-type PPIase family. Tig subfamily.

Its subcellular location is the cytoplasm. It catalyses the reaction [protein]-peptidylproline (omega=180) = [protein]-peptidylproline (omega=0). In terms of biological role, involved in protein export. Acts as a chaperone by maintaining the newly synthesized protein in an open conformation. Functions as a peptidyl-prolyl cis-trans isomerase. The chain is Trigger factor from Rhodopirellula baltica (strain DSM 10527 / NCIMB 13988 / SH1).